The chain runs to 202 residues: Glycerol-3-phosphate acyltransferase (202 aa).

5 consecutive transmembrane segments (helical) span residues 3–23 (NLII…LILA), 87–107 (LLWS…YLLF), 118–138 (GAMI…WVVI), 144–164 (ISSL…FIFN), and 167–187 (LEIH…YKHL).

This sequence belongs to the PlsY family. Probably interacts with PlsX.

It localises to the cell inner membrane. It carries out the reaction an acyl phosphate + sn-glycerol 3-phosphate = a 1-acyl-sn-glycero-3-phosphate + phosphate. The protein operates within lipid metabolism; phospholipid metabolism. In terms of biological role, catalyzes the transfer of an acyl group from acyl-phosphate (acyl-PO(4)) to glycerol-3-phosphate (G3P) to form lysophosphatidic acid (LPA). This enzyme utilizes acyl-phosphate as fatty acyl donor, but not acyl-CoA or acyl-ACP. The sequence is that of Glycerol-3-phosphate acyltransferase from Campylobacter jejuni subsp. jejuni serotype O:2 (strain ATCC 700819 / NCTC 11168).